A 172-amino-acid polypeptide reads, in one-letter code: Lipoprotein signal peptidase (172 aa).

A run of 2 helical transmembrane segments spans residues 70–90 and 94–114; these read ERWLLVAGTALIAAGIVAWIW and AKGDVVALGLVLGGAIGNIAD. Residues Asp123 and Asp142 contribute to the active site. The helical transmembrane segment at 134–154 threads the bilayer; the sequence is PFLVFNVADAAITIGVLILVL.

The protein belongs to the peptidase A8 family.

Its subcellular location is the cell inner membrane. It catalyses the reaction Release of signal peptides from bacterial membrane prolipoproteins. Hydrolyzes -Xaa-Yaa-Zaa-|-(S,diacylglyceryl)Cys-, in which Xaa is hydrophobic (preferably Leu), and Yaa (Ala or Ser) and Zaa (Gly or Ala) have small, neutral side chains.. It participates in protein modification; lipoprotein biosynthesis (signal peptide cleavage). This protein specifically catalyzes the removal of signal peptides from prolipoproteins. This Rhizorhabdus wittichii (strain DSM 6014 / CCUG 31198 / JCM 15750 / NBRC 105917 / EY 4224 / RW1) (Sphingomonas wittichii) protein is Lipoprotein signal peptidase.